The sequence spans 400 residues: Subtilisin-like protease 11 (400 aa).

An N-terminal signal peptide occupies residues 1-19; the sequence is MGLFKVIFTAVAALSAVDA. A propeptide spanning residues 20–117 is cleaved from the precursor; it reads AELLSSAKSK…VEHDRHVYIS (98 aa). Residues 35–116 form the Inhibitor I9 domain; that stretch reads SYLVVMKDSV…FVEHDRHVYI (82 aa). The Peptidase S8 domain occupies 127-400; it reads SWGLGRVSHR…NKLLYNGSGK (274 aa). N138 carries N-linked (GlcNAc...) asparagine glycosylation. Catalysis depends on D159, which acts as the Charge relay system. N181 is a glycosylation site (N-linked (GlcNAc...) asparagine). The Charge relay system role is filled by H191. 2 N-linked (GlcNAc...) asparagine glycosylation sites follow: N252 and N337. Residue S346 is the Charge relay system of the active site. 2 N-linked (GlcNAc...) asparagine glycosylation sites follow: N388 and N396.

The protein belongs to the peptidase S8 family.

It localises to the secreted. In terms of biological role, secreted subtilisin-like serine protease with keratinolytic activity that contributes to pathogenicity. The protein is Subtilisin-like protease 11 (SUB11) of Arthroderma benhamiae (strain ATCC MYA-4681 / CBS 112371) (Trichophyton mentagrophytes).